The sequence spans 187 residues: Orotate phosphoribosyltransferase (187 aa).

Residues Arg98, Lys99, Lys102, His104, and 128-136 (EDVTTTGGS) contribute to the 5-phospho-alpha-D-ribose 1-diphosphate site. Orotate contacts are provided by Thr132 and Arg160.

It belongs to the purine/pyrimidine phosphoribosyltransferase family. PyrE subfamily. As to quaternary structure, homodimer. It depends on Mg(2+) as a cofactor.

It carries out the reaction orotidine 5'-phosphate + diphosphate = orotate + 5-phospho-alpha-D-ribose 1-diphosphate. It functions in the pathway pyrimidine metabolism; UMP biosynthesis via de novo pathway; UMP from orotate: step 1/2. Its function is as follows. Catalyzes the transfer of a ribosyl phosphate group from 5-phosphoribose 1-diphosphate to orotate, leading to the formation of orotidine monophosphate (OMP). The sequence is that of Orotate phosphoribosyltransferase from Rhodopseudomonas palustris (strain BisB18).